Reading from the N-terminus, the 88-residue chain is Snakin-1 (88 aa).

An N-terminal signal peptide occupies residues 1–25; the sequence is MKLFLLTLLLVTLVITPSLIQTTMA.

This sequence belongs to the GASA family. Six disulfide bonds may be present. In terms of tissue distribution, expressed in tubers, stems, axillary and young floral buds, sepals, petals, stamens and carpels, but not in roots, stolons, shoot apex meristem or young leaves.

It localises to the secreted. It is found in the cell wall. Functionally, has an antimicrobial activity. Causes a rapid aggregation of both Gram-positive and Gram-negative bacteria, but the antimicrobial activity is not correlated with the capacity to aggregate bacteria. This is Snakin-1 (SN1) from Solanum tuberosum (Potato).